We begin with the raw amino-acid sequence, 120 residues long: Large ribosomal subunit protein uL18 (120 aa).

Belongs to the universal ribosomal protein uL18 family. In terms of assembly, part of the 50S ribosomal subunit; part of the 5S rRNA/L5/L18/L25 subcomplex. Contacts the 5S and 23S rRNAs.

Functionally, this is one of the proteins that bind and probably mediate the attachment of the 5S RNA into the large ribosomal subunit, where it forms part of the central protuberance. The chain is Large ribosomal subunit protein uL18 from Picosynechococcus sp. (strain ATCC 27264 / PCC 7002 / PR-6) (Agmenellum quadruplicatum).